A 112-amino-acid polypeptide reads, in one-letter code: Cytochrome c3 (112 aa).

Residues histidine 26, histidine 29, cysteine 34, cysteine 37, histidine 38, histidine 39, cysteine 49, cysteine 54, histidine 55, histidine 73, cysteine 83, cysteine 86, histidine 87, cysteine 104, cysteine 109, and histidine 110 each coordinate heme c.

Heme is required as a cofactor.

Functionally, participates in sulfate respiration coupled with phosphorylation by transferring electrons from the enzyme dehydrogenase to ferredoxin. The sequence is that of Cytochrome c3 from Megalodesulfovibrio gigas (strain ATCC 19364 / DSM 1382 / NCIMB 9332 / VKM B-1759) (Desulfovibrio gigas).